The sequence spans 110 residues: MLNYLWFFLAALFEIAGCFAFWMWLRQGKSALWVIPALISLTLFALLLTRVEATYAGRAYAAYGGIYIIASIGWLAVVERIRPLGSDWIGVALCVIGATVILFGPRFSAS.

The next 4 membrane-spanning stretches (helical) occupy residues 5–25, 28–48, 59–79, and 84–104; these read LWFFLAALFEIAGCFAFWMWL, GKSALWVIPALISLTLFALLL, AYAAYGGIYIIASIGWLAVVE, and LGSDWIGVALCVIGATVILFG.

It belongs to the UPF0060 family.

It localises to the cell inner membrane. The chain is UPF0060 membrane protein Pfl01_4105 from Pseudomonas fluorescens (strain Pf0-1).